Here is a 302-residue protein sequence, read N- to C-terminus: Orotidine 5'-phosphate decarboxylase (302 aa).

K105 serves as the catalytic Proton donor.

Belongs to the OMP decarboxylase family. Type 2 subfamily.

It catalyses the reaction orotidine 5'-phosphate + H(+) = UMP + CO2. Its pathway is pyrimidine metabolism; UMP biosynthesis via de novo pathway; UMP from orotate: step 2/2. The sequence is that of Orotidine 5'-phosphate decarboxylase from Rhodopirellula baltica (strain DSM 10527 / NCIMB 13988 / SH1).